The sequence spans 439 residues: Secreted RxLR effector protein 117 (439 aa).

The signal sequence occupies residues 1 to 21; the sequence is MRGAYYVLAALLVVASSQIAA. Positions 48 to 65 match the RxLR-dEER motif; sequence RYLRGGHDVHDDSANEER.

Belongs to the RxLR effector family.

Its subcellular location is the secreted. It is found in the host nucleus. Its function is as follows. Secreted effector that acts as an elicitor that induces cell death in host plant cells. This is Secreted RxLR effector protein 117 from Plasmopara viticola (Downy mildew of grapevine).